The following is a 322-amino-acid chain: Mitochondrial uncoupling protein 4 (322 aa).

Solcar repeat units lie at residues 20–114 (SKFL…LREV), 124–216 (YPLW…VKHY), and 225–316 (DNIS…IREM). 6 helical membrane passes run 22–39 (FLLSGCAATVAELATFPL), 87–108 (WQGVTPAIYRHVVYSGGRMVTY), 126–143 (LWKSVIGGMMAGVIGQFL), 194–211 (PNIQRAALVNMGDLTTYD), 228–247 (STHGLSSLCSGLVASILGTP), and 287–310 (SLYKGFLPSWLRMTPWSMVFWLTY).

Belongs to the mitochondrial carrier (TC 2.A.29) family. Homotetramer.

The protein localises to the mitochondrion inner membrane. The protein resides in the cell projection. It is found in the neuron projection. The enzyme catalyses H(+)(in) = H(+)(out). It carries out the reaction chloride(in) = chloride(out). Facilitates proton transport across the inner mitochondrial membrane and may dissipate excessive proton gradient associated with oxidative and metabolic stress at neuronal synapses. Regulates glutamate-induced proton conductance in astrocytes, shifting the energy metabolism toward aerobic glycolysis and lactate transfer to neurons for ATP synthesis. Can transport chloride ions with lower efficiency. The transport mechanism remains to be elucidated. This chain is Mitochondrial uncoupling protein 4, found in Mus musculus (Mouse).